A 355-amino-acid polypeptide reads, in one-letter code: MGTYLSSPKTEKLSEDGENDKLRFGLSSMQGWRATMEDAHAAILDLDDKTSFFGVYDGHGGKVVAKFCAKYLHQQVISNEAYKTGDVETSLRRAFFRMDDMMQGQRGWRELAVLGDKMNKFSGMIEGFIWSPRSGDTNNQPDSWPLEDGPHSDFTGPTSGCTACVALIKDKKLFVANAGDSRCVISRKSQAYNLSKDHKPDLEVEKERILKAGGFIHAGRINGSLNLTRAIGDMEFKQNKFLPSEKQMVTADPDINTIDLCDDDDFLVVACDGIWDCMSSQELVDFIHEQLKSETKLSTVCEKVVDRCLAPDTATGEGCDNMTIILVQFKKPNPSETEPEDSKPEPSEDEPSSSS.

Residues 23 to 329 form the PPM-type phosphatase domain; that stretch reads RFGLSSMQGW…DNMTIILVQF (307 aa). 4 residues coordinate Mn(2+): D57, G58, D272, and D320. The interval 329-355 is disordered; it reads FKKPNPSETEPEDSKPEPSEDEPSSSS.

It belongs to the PP2C family. Mg(2+) serves as cofactor. Mn(2+) is required as a cofactor.

It carries out the reaction O-phospho-L-seryl-[protein] + H2O = L-seryl-[protein] + phosphate. The catalysed reaction is O-phospho-L-threonyl-[protein] + H2O = L-threonyl-[protein] + phosphate. In Arabidopsis thaliana (Mouse-ear cress), this protein is Probable protein phosphatase 2C 21 (PPC4-2).